A 162-amino-acid chain; its full sequence is UPF0305 protein MmarC7_1691 (162 aa).

It belongs to the UPF0305 family.

The chain is UPF0305 protein MmarC7_1691 from Methanococcus maripaludis (strain C7 / ATCC BAA-1331).